A 244-amino-acid polypeptide reads, in one-letter code: Geranylgeranylglyceryl phosphate synthase (244 aa).

Residues aspartate 20 and serine 49 each contribute to the Mg(2+) site. Sn-glycerol 1-phosphate-binding positions include 169 to 175, 200 to 201, and 222 to 223; these read YLEAGSG, GG, and GT.

Belongs to the GGGP/HepGP synthase family. Group II subfamily. Mg(2+) is required as a cofactor.

Its subcellular location is the cytoplasm. The catalysed reaction is sn-glycerol 1-phosphate + (2E,6E,10E)-geranylgeranyl diphosphate = sn-3-O-(geranylgeranyl)glycerol 1-phosphate + diphosphate. The protein operates within membrane lipid metabolism; glycerophospholipid metabolism. Its function is as follows. Prenyltransferase that catalyzes the transfer of the geranylgeranyl moiety of geranylgeranyl diphosphate (GGPP) to the C3 hydroxyl of sn-glycerol-1-phosphate (G1P). This reaction is the first ether-bond-formation step in the biosynthesis of archaeal membrane lipids. The sequence is that of Geranylgeranylglyceryl phosphate synthase from Korarchaeum cryptofilum (strain OPF8).